We begin with the raw amino-acid sequence, 401 residues long: Probable aspartate/prephenate aminotransferase (401 aa).

3 residues coordinate L-aspartate: Gly-39, Trp-125, and Asn-175. Lys-239 carries the post-translational modification N6-(pyridoxal phosphate)lysine. Arg-375 is an L-aspartate binding site.

It belongs to the class-I pyridoxal-phosphate-dependent aminotransferase family. Homodimer. Pyridoxal 5'-phosphate is required as a cofactor.

The protein localises to the cytoplasm. The catalysed reaction is L-aspartate + 2-oxoglutarate = oxaloacetate + L-glutamate. It carries out the reaction L-arogenate + 2-oxoglutarate = prephenate + L-glutamate. Its function is as follows. Catalyzes the reversible conversion of aspartate and 2-oxoglutarate to glutamate and oxaloacetate. Can also transaminate prephenate in the presence of glutamate. This chain is Probable aspartate/prephenate aminotransferase (aatA), found in Rickettsia conorii (strain ATCC VR-613 / Malish 7).